Consider the following 616-residue polypeptide: MRDFLKLLKKHDELKIIDTPLEVDLEIAHLAYIEAKKPNGGKALLFTQPIRKEHNQIKTFGMPVLMNAFGSFKRLDLLLKTPIEDLQQRMQAFLHFDAPKNFTESLKILKDLWDLRHVFPKKTARPKDLITKQDKEVNLWDLPVLKTWEKDGGAFITMGQVYTQSLDHKKKNLGMYRLQVYDKNHLGLHWQIHKDSQLFFHEYAKAKVKMPISIAIGGDLLYTWCATAPLPYGIYELMLYGFIREKKARVMPCLSNPLSVPSDCDIVIEGFVDCEKLELEGPFGDHTGYYTPIEPYPVLEVKTISYKKDSIYLATVVGKPPLEDKYMGYLTERLFLPLLQTHAPNLIDYYMPENGVFHNLILAKIHTRYNAHAKQVMHAFWGVGQMSFVKHAIFVNEDAPNLRDTNAIIEYILENFSKENALISQGVCDALDHASPEYAMGGKLGIDATSKSNTPYPTLLNDNALLALLQDKMQNIVLLKQYYPHTRNPICVISVEKKDKSVIELAKNLLGFEEHLRIVIFVEHASNDLNNPYMLLWRIVNNIDAKRDILTSKHCFFIDATNKGVMDKHFREWPTETNCSMEVIENLKKKGLLKDFETLNQKFHLTHSFSTHKEDL.

Belongs to the UbiD family.

This is an uncharacterized protein from Helicobacter pylori (strain J99 / ATCC 700824) (Campylobacter pylori J99).